A 387-amino-acid polypeptide reads, in one-letter code: 3-ketoacyl-CoA thiolase (387 aa).

The active-site Acyl-thioester intermediate is cysteine 91. Catalysis depends on proton acceptor residues histidine 343 and cysteine 373.

The protein belongs to the thiolase-like superfamily. Thiolase family. Heterotetramer of two alpha chains (FadB) and two beta chains (FadA).

The protein resides in the cytoplasm. It carries out the reaction an acyl-CoA + acetyl-CoA = a 3-oxoacyl-CoA + CoA. It functions in the pathway lipid metabolism; fatty acid beta-oxidation. Its function is as follows. Catalyzes the final step of fatty acid oxidation in which acetyl-CoA is released and the CoA ester of a fatty acid two carbons shorter is formed. This is 3-ketoacyl-CoA thiolase from Shewanella sp. (strain MR-7).